Reading from the N-terminus, the 853-residue chain is Auxin response factor 23 (853 aa).

The segment at 118–141 is disordered; sequence PESKQQEDNGSTEEEVPSAPAAGH. Positions 149–251 form a DNA-binding region, TF-B3; that stretch reads FCKTLTASDT…ELRVGVRRAM (103 aa). Disordered stretches follow at residues 422–484 and 647–723; these read ESEP…RMQM and PAKS…QGVS. Positions 425 to 455 are enriched in polar residues; sequence PNGTQRTFQTQENATPKSGFGNSSELESAQK. Residues 672-686 are compositionally biased toward basic and acidic residues; sequence EWRRPDVTEVEKCSD. Positions 706–723 are enriched in polar residues; the sequence is PSSQQASRNMSCKSQGVS. Positions 725-809 constitute a PB1 domain; the sequence is RSCKKVHKQG…HKIFIYTREE (85 aa). The segment at 815-853 is disordered; that stretch reads PGTLNSRSEDSHANSMERGSVGREMRGCLSTSSLNSENC. The span at 843–853 shows a compositional bias: polar residues; that stretch reads LSTSSLNSENC.

Belongs to the ARF family. As to quaternary structure, homodimers and heterodimers. Interacts with CRL1. In terms of tissue distribution, expressed in roots, culms, leaves and young panicles.

It is found in the nucleus. In terms of biological role, auxin response factors (ARFs) are transcriptional factors that bind specifically to the DNA sequence 5'-TGTCTC-3' found in the auxin-responsive promoter elements (AuxREs). This chain is Auxin response factor 23 (ARF23), found in Oryza sativa subsp. japonica (Rice).